The chain runs to 199 residues: Probable nicotinate-nucleotide adenylyltransferase (199 aa).

It belongs to the NadD family.

The catalysed reaction is nicotinate beta-D-ribonucleotide + ATP + H(+) = deamido-NAD(+) + diphosphate. Its pathway is cofactor biosynthesis; NAD(+) biosynthesis; deamido-NAD(+) from nicotinate D-ribonucleotide: step 1/1. In terms of biological role, catalyzes the reversible adenylation of nicotinate mononucleotide (NaMN) to nicotinic acid adenine dinucleotide (NaAD). The chain is Probable nicotinate-nucleotide adenylyltransferase from Leptospira interrogans serogroup Icterohaemorrhagiae serovar copenhageni (strain Fiocruz L1-130).